The following is a 419-amino-acid chain: D-amino acid dehydrogenase (419 aa).

An FAD-binding site is contributed by 3-17 (VLVLGAGVAGVSSVW).

This sequence belongs to the DadA oxidoreductase family. Requires FAD as cofactor.

It carries out the reaction a D-alpha-amino acid + A + H2O = a 2-oxocarboxylate + AH2 + NH4(+). It participates in amino-acid degradation; D-alanine degradation; NH(3) and pyruvate from D-alanine: step 1/1. Its function is as follows. Oxidative deamination of D-amino acids. The polypeptide is D-amino acid dehydrogenase (Neisseria gonorrhoeae (strain ATCC 700825 / FA 1090)).